Consider the following 133-residue polypeptide: Interleukin-4 (133 aa).

The N-terminal stretch at 1 to 24 (MGLTSQLIPTLVCLLVCTSNFAHG) is a signal peptide. Intrachain disulfides connect Cys27/Cys133, Cys48/Cys85, and Cys70/Cys105. Residues Asn62, Asn96, Asn102, and Asn108 are each glycosylated (N-linked (GlcNAc...) asparagine).

This sequence belongs to the IL-4/IL-13 family.

It localises to the secreted. Participates in at least several B-cell activation processes as well as of other cell types. It is a costimulator of DNA-synthesis. It induces the expression of class II MHC molecules on resting B-cells. It enhances both secretion and cell surface expression of IgE and IgG1. It also regulates the expression of the low affinity Fc receptor for IgE (CD23) on both lymphocytes and monocytes. Positively regulates IL31RA expression in macrophages. Stimulates autophagy in dendritic cells by interfering with mTORC1 signaling and through the induction of RUFY4. This chain is Interleukin-4 (IL4), found in Lama glama (Llama).